A 505-amino-acid polypeptide reads, in one-letter code: Maturase K (505 aa).

It belongs to the intron maturase 2 family. MatK subfamily.

The protein localises to the plastid. It is found in the chloroplast. Its function is as follows. Usually encoded in the trnK tRNA gene intron. Probably assists in splicing its own and other chloroplast group II introns. The chain is Maturase K from Gomphrena haageana (Haage's globe-amaranth).